Reading from the N-terminus, the 167-residue chain is Single-stranded DNA-binding protein 2 (167 aa).

Residues 1–104 (MLNRVVLVGR…VVCDSVQFLE (104 aa)) enclose the SSB domain. The tract at residues 107-167 (NAQQNGGQRQ…IDISDDDLPF (61 aa)) is disordered. Low complexity-rich tracts occupy residues 109–118 (QQNGGQRQQN) and 132–147 (SGQN…TKQS). An Important for interaction with partner proteins motif is present at residues 162 to 167 (DDDLPF).

In terms of assembly, homotetramer.

Plays an important role in DNA replication, recombination and repair. Binds to ssDNA and to an array of partner proteins to recruit them to their sites of action during DNA metabolism. The protein is Single-stranded DNA-binding protein 2 (ssb2) of Staphylococcus aureus (strain MSSA476).